A 456-amino-acid polypeptide reads, in one-letter code: MTGDSRSISEPSINLDPDNTSFSDENSDDFFMDNSYDIDEIDHSDESNRQSVIVDSKVTVPPSKHSTLTLSDSEDSDAKEQHQSLSRSSSKNVNIEDITEPKPDKPSGRTRGRSVMKESVVEINSSESDLDEDKNFPRSRSRSRSSIRSISPAGKYKRQKSSLLYTYDENDDFFKELAKEAKKSTTISKESTPDQRKRVYNIKFLSKLEGTINKAVQVKVLGKYEFSKILPAALDGLMKSYKIPKVMKDIYKVENVTLYWNNAKLLTFMTCNSLHIPQDFENEVSDIDVTIVSKEYEKNFEATLESKLKEEEAALLIKERQEMERKLEKKRNEQEESEYREFESELKNVEETQEIKENDTVMNTKLLQEGGSLSGNSSSMEEVMRIALMGQDNKKIYVHVRRSTPFSKIAEYYRIQKQLPQKTRVKLLFDHDELDMNECIADQDMEDEDMVDVIID.

A compositionally biased stretch (polar residues) spans 1 to 24 (MTGDSRSISEPSINLDPDNTSFSD). Residues 1 to 154 (MTGDSRSISE…SSIRSISPAG (154 aa)) are disordered. Acidic residues predominate over residues 25–43 (ENSDDFFMDNSYDIDEIDH). The segment covering 83–93 (QSLSRSSSKNV) has biased composition (polar residues). 3 positions are modified to phosphoserine: S90, S125, and S126. An SUMO-like region 1 repeat occupies 169–287 (ENDDFFKELA…QDFENEVSDI (119 aa)). Residues 301–360 (EATLESKLKEEEAALLIKERQEMERKLEKKRNEQEESEYREFESELKNVEETQEIKENDT) adopt a coiled-coil conformation. An SUMO-like region 2 repeat occupies 380–456 (MEEVMRIALM…DEDMVDVIID (77 aa)).

Component of a cullin-RING ligase (CRL)-like complex composed of at least the cullin RTT101, a linker protein MMS1, and the potential substrate receptor ESC2. Interacts with RTT101 and MMS1. Interacts with SIR2.

The protein localises to the cytoplasm. The protein resides in the nucleus. In terms of biological role, may be a substrate targeting component of a cullin-RING-based E3 ubiquitin-protein ligase complex RTT101(MMS1-ESC2). Involved in HMR and telomere silencing via the recruitment or stabilizing of the SIR (silent information regulators) complex. The chain is Protein ESC2 (ESC2) from Saccharomyces cerevisiae (strain ATCC 204508 / S288c) (Baker's yeast).